Reading from the N-terminus, the 667-residue chain is Phosphomethylpyrimidine synthase (667 aa).

Residues asparagine 235, methionine 264, tyrosine 293, histidine 329, serine 349–glycine 351, aspartate 390–arginine 393, and glutamate 429 each bind substrate. Residue histidine 433 coordinates Zn(2+). Residue tyrosine 456 coordinates substrate. A Zn(2+)-binding site is contributed by histidine 497. [4Fe-4S] cluster is bound by residues cysteine 577, cysteine 580, and cysteine 585. The disordered stretch occupies residues aspartate 618 to serine 642.

It belongs to the ThiC family. In terms of assembly, homodimer. [4Fe-4S] cluster is required as a cofactor.

The enzyme catalyses 5-amino-1-(5-phospho-beta-D-ribosyl)imidazole + S-adenosyl-L-methionine = 4-amino-2-methyl-5-(phosphooxymethyl)pyrimidine + CO + 5'-deoxyadenosine + formate + L-methionine + 3 H(+). The protein operates within cofactor biosynthesis; thiamine diphosphate biosynthesis. Functionally, catalyzes the synthesis of the hydroxymethylpyrimidine phosphate (HMP-P) moiety of thiamine from aminoimidazole ribotide (AIR) in a radical S-adenosyl-L-methionine (SAM)-dependent reaction. The polypeptide is Phosphomethylpyrimidine synthase (Shewanella pealeana (strain ATCC 700345 / ANG-SQ1)).